The following is a 349-amino-acid chain: Mitomycin biosynthesis 6-O-methyltransferase (349 aa).

Residues Ser167, Gly190, 213-214 (ER), 240-241 (DF), and Lys255 contribute to the S-adenosyl-L-methionine site. His259 functions as the Proton acceptor in the catalytic mechanism. Asn288 contacts substrate.

This sequence belongs to the class I-like SAM-binding methyltransferase superfamily. Cation-independent O-methyltransferase family. COMT subfamily. Homodimer.

It catalyses the reaction 6-demethylmitomycin A + S-adenosyl-L-methionine = mitomycin A + S-adenosyl-L-homocysteine. The enzyme catalyses 6-demethylmitomycin B + S-adenosyl-L-methionine = mitomycin B + S-adenosyl-L-homocysteine. With respect to regulation, completely inhibited by Zn(2+) and Cu(2+). Involved in the biosynthesis of the quinone methoxy group present in the mitomycin A and B, which are used as anticancer agents. In vitro, catalyzes the 6-O-methylation of both C9-beta- and C9-alpha-configured 6-hydroxymitomycins via the transfer of the S-methyl group of S-adenosyl-L-methionine (AdoMet) to the 6-demethylmitomycin A and B. It can also use hydroxyquinone as substrate. In Streptomyces lavendulae, this protein is Mitomycin biosynthesis 6-O-methyltransferase.